Here is a 975-residue protein sequence, read N- to C-terminus: Probable dipeptidyl-aminopeptidase B (975 aa).

The segment covering 1–20 (MAEHGHNMWEEEPSKGRDSL) has biased composition (basic and acidic residues). Residues 1–111 (MAEHGHNMWE…LSAASGSAGK (111 aa)) form a disordered region. The Cytoplasmic segment spans residues 1–125 (MAEHGHNMWE…YRMMDRGLRR (125 aa)). Positions 22–31 (SDSSASTTSL) are enriched in low complexity. Residues 68 to 84 (LDDEDPLKDEASGDYDL) show a composition bias toward acidic residues. The helical; Signal-anchor for type II membrane protein transmembrane segment at 126-146 (VLIIASLVFVTAWVGGLFIYI) threads the bilayer. The Vacuolar segment spans residues 147–975 (SHKSYLHGSE…IDNAKPQGKR (829 aa)). Asn207, Asn397, and Asn622 each carry an N-linked (GlcNAc...) asparagine glycan. The active-site Charge relay system is Ser826. Residue Asn885 is glycosylated (N-linked (GlcNAc...) asparagine). Catalysis depends on charge relay system residues Asp903 and His936.

Belongs to the peptidase S9B family.

The protein resides in the vacuole membrane. It catalyses the reaction Release of an N-terminal dipeptide, Xaa-Yaa-|-Zaa-, from a polypeptide, preferentially when Yaa is Pro, provided Zaa is neither Pro nor hydroxyproline.. Its function is as follows. Type IV dipeptidyl-peptidase which removes N-terminal dipeptides sequentially from polypeptides having unsubstituted N-termini provided that the penultimate residue is proline. The polypeptide is Probable dipeptidyl-aminopeptidase B (DAPB) (Grosmannia clavigera (strain kw1407 / UAMH 11150) (Blue stain fungus)).